The primary structure comprises 122 residues: Large ribosomal subunit protein uL14 (122 aa).

The protein belongs to the universal ribosomal protein uL14 family. Part of the 50S ribosomal subunit. Forms a cluster with proteins L3 and L19. In the 70S ribosome, L14 and L19 interact and together make contacts with the 16S rRNA in bridges B5 and B8.

Its function is as follows. Binds to 23S rRNA. Forms part of two intersubunit bridges in the 70S ribosome. This is Large ribosomal subunit protein uL14 from Gluconobacter oxydans (strain 621H) (Gluconobacter suboxydans).